We begin with the raw amino-acid sequence, 551 residues long: Probable alpha-glucosidase (551 aa).

The active-site Nucleophile is Asp212. Glu272 functions as the Proton donor in the catalytic mechanism.

Belongs to the glycosyl hydrolase 13 family.

It catalyses the reaction Hydrolysis of terminal, non-reducing (1-&gt;4)-linked alpha-D-glucose residues with release of alpha-D-glucose.. This chain is Probable alpha-glucosidase (aglA), found in Rhizobium meliloti (strain 1021) (Ensifer meliloti).